A 522-amino-acid chain; its full sequence is Sterol O-acyltransferase 2 (522 aa).

Disordered regions lie at residues Met-1 to Pro-36 and Ser-74 to Pro-96. The Cytoplasmic segment spans residues Met-1–Phe-120. Positions Gly-17–Pro-36 are enriched in basic and acidic residues. Position 119 (His-119) interacts with cholesterol. A helical membrane pass occupies residues Arg-121–Asp-142. At Phe-143 to Gln-162 the chain is on the lumenal side. The chain crosses the membrane as a helical span at residues Leu-163–Trp-188. At Ala-189–Ala-196 the chain is on the cytoplasmic side. A helical transmembrane segment spans residues Thr-197 to Val-220. The Lumenal segment spans residues Glu-221–Ser-228. The helical transmembrane segment at Arg-229–Pro-252 threads the bilayer. Residues Gly-253 to Arg-293 are Cytoplasmic-facing. Cys-277 is subject to Cysteine sulfenic acid (-SOH); alternate. Cys-277 is covalently cross-linked (Glycyl cysteine thioester (Cys-Gly) (interchain with G-Cter in ubiquitin); alternate). The chain crosses the membrane as a helical span at residues Trp-294–Met-326. At Ser-327–Ala-343 the chain is on the lumenal side. A helical transmembrane segment spans residues Thr-344 to Met-369. At Leu-370–Arg-417 the chain is on the cytoplasmic side. An FYXDWWN motif motif is present at residues Phe-377–Asn-383. Residues Asn-389, Arg-392, Asn-395, His-399, Tyr-407, and Ser-430 each coordinate an acyl-CoA. Residues Ala-418 to Leu-442 form a helical membrane-spanning segment. His-434 is a catalytic residue. The Lumenal segment spans residues Gly-443–Val-448. A helical transmembrane segment spans residues Met-449–Met-464. Residues His-465 to Gly-470 lie on the Cytoplasmic side of the membrane. The helical transmembrane segment at Pro-471–Cys-502 threads the bilayer. Residues Pro-503–Thr-522 are Lumenal-facing.

The protein belongs to the membrane-bound acyltransferase family. Sterol o-acyltransferase subfamily. As to quaternary structure, may form homo- or heterodimers. Interacts with INSIG1; the interaction is direct and promotes association with AMFR/gp78. Post-translationally, polyubiquitinated by AMFR/gp78 at Cys-277, leading to its degradation when the lipid levels are low. Association with AMFR/gp78 is mediated via interaction with INSIG1. High concentration of cholesterol and fatty acid results in Cys-277 oxidation, preventing ubiquitination at the same site, resulting in protein stabilization. In terms of processing, oxidized at Cys-277: high concentration of cholesterol and fatty acid induce reactive oxygen species, which oxidizes Cys-277, preventing ubiquitination at the same site, and resulting in protein stabilization. In terms of tissue distribution, expression seems confined in hepatocytes and enterocytes.

Its subcellular location is the endoplasmic reticulum membrane. It carries out the reaction a sterol + a long-chain fatty acyl-CoA = a long-chain 3-hydroxysterol ester + CoA. The catalysed reaction is cholesterol + an acyl-CoA = a cholesterol ester + CoA. The enzyme catalyses cholesterol + (9Z)-octadecenoyl-CoA = cholesteryl (9Z-octadecenoate) + CoA. It catalyses the reaction (5Z,8Z,11Z,14Z,17Z)-eicosapentaenoyl-CoA + cholesterol = (5Z,8Z,11Z,14Z,17Z-eicosapentaenoyl)-cholesterol + CoA. It carries out the reaction (9Z,12Z,15Z)-octadecatrienoyl-CoA + cholesterol = (9Z,12Z,15Z-octadecatrienoyl)-cholesterol + CoA. The catalysed reaction is (5Z,8Z,11Z,14Z)-eicosatetraenoyl-CoA + cholesterol = cholesteryl (5Z,8Z,11Z,14Z)-eicosatetraenoate + CoA. Catalyzes the formation of fatty acid-cholesterol esters, which are less soluble in membranes than cholesterol. Plays a role in lipoprotein assembly and dietary cholesterol absorption. Utilizes oleoyl-CoA ((9Z)-octadecenoyl-CoA) and linolenoyl-CoA ((9Z,12Z,15Z)-octadecatrienoyl-CoA) as substrates. May provide cholesteryl esters for lipoprotein secretion from hepatocytes and intestinal mucosa. Its function is as follows. Has lower enzymatic activity compared to isoform 1. In Homo sapiens (Human), this protein is Sterol O-acyltransferase 2.